A 308-amino-acid polypeptide reads, in one-letter code: Low density lipoprotein receptor adapter protein 1 (308 aa).

Met1 is subject to N-acetylmethionine. Ser14 is modified (phosphoserine). Positions 41 to 195 constitute a PID domain; the sequence is LLEGMVFSLK…QEGGDVPGTR (155 aa). The segment at 179–201 is disordered; sequence EKREKANQEGGDVPGTRRDSTPS. Phosphoserine occurs at positions 198 and 201. Positions 211-215 match the Clathrin box motif; that stretch reads LLDLE. The tract at residues 248-275 is AP-2 complex binding; it reads WELDDGLDEAFSRLAQSRTNPQVLDTGL. Positions 256 to 265 match the [DE]-X(1,2)-F-X-X-[FL]-X-X-X-R motif motif; the sequence is EAFSRLAQSR. Residues 288-308 form a disordered region; it reads PTDWDKPDSSGIDQDDDVFTF.

As to quaternary structure, interacts (via PID domain) with LDLR (via NPXY motif). Binds to soluble clathrin trimers. Interacts with AP2B1; the interaction mediates the association with the AP-2 complex. Interacts with VLDLR. Interacts with LRP2.

The protein localises to the cytoplasm. Functionally, adapter protein (clathrin-associated sorting protein (CLASP)) required for efficient endocytosis of the LDL receptor (LDLR) in polarized cells such as hepatocytes and lymphocytes, but not in non-polarized cells (fibroblasts). May be required for LDL binding and internalization but not for receptor clustering in coated pits. May facilitate the endocytosis of LDLR and LDLR-LDL complexes from coated pits by stabilizing the interaction between the receptor and the structural components of the pits. May also be involved in the internalization of other LDLR family members. Binds to phosphoinositides, which regulate clathrin bud assembly at the cell surface. Required for trafficking of LRP2 to the endocytic recycling compartment which is necessary for LRP2 proteolysis, releasing a tail fragment which translocates to the nucleus and mediates transcriptional repression. The sequence is that of Low density lipoprotein receptor adapter protein 1 from Mus musculus (Mouse).